Reading from the N-terminus, the 1193-residue chain is Dynamin-like protein A (1193 aa).

The D1, associates with and fuses membranes, tethers lipsomes stretch occupies residues 1-609; it reads MTDQNRKELL…AFRERVKRLE (609 aa). The G1 motif D1 stretch occupies residues 50–57; that stretch reads GHYSAGKS. The segment at 76 to 78 is G2 motif D1; it reads TSA. A G3 motif D1 region spans residues 141 to 144; it reads DTPG. A G4 motif D1 region spans residues 199-202; sequence NQID. The tract at residues 561 to 1193 is D2, does not associate with membranes; the sequence is MPKSEIKMEQ…WKNSDNTIKM (633 aa). The interval 619–626 is G1 motif D2; sequence GGFSSGKS. Residues 645–647 are G2 motif D2; it reads TTA. The tract at residues 774-777 is G3 motif D2; that stretch reads DTPG. Residues 837–840 form a G4 motif D2 region; sequence NAAD.

The protein belongs to the TRAFAC class dynamin-like GTPase superfamily. Dynamin/Fzo/YdjA family. Homodimer in solution. Both D1 and D2 domains interact with YwpG, YneK interacts only with D1 while RNase Y (rny) only interacts with whole protein. Probably oligomerizes at damaged membrane sites. Mg(2+) is required as a cofactor.

The protein resides in the cell membrane. The catalysed reaction is GTP + H2O = GDP + phosphate + H(+). Its function is as follows. Mediates lipid mixing of vesicles and full mixing of their contents in the absence and presence of GTP. Tethers and mixes small vesicles better than larger ones, indicating a curvature preference. GTP slows down DynA-mediated lipid fusion, perhaps controlling its activity. Prefers phospholipid composition close to the B.subtilis membrane; requires phosphatidylglycerol for fusion has no activity on pure phosphatidylethanolamine vesicles. Regulates membrane lipid diffusion. Required to prevent membrane damage when exposed to low levels of membrane-damaging antibiotics or to bacteriophage. Probably surveys the cell membrane for stress; localizes to sites of membrane damage (treatment with nisin) and forms foci in cells treated with pore-forming compounds (CCCP). May assist membrane repair, possibly by membrane tethering and fusion. Probably functions both in early and late cell division, affects the proper formation of the FtsZ ring. Plays a non-redundant role with flottilin (floT) in membrane dynamics and cell shape. Probably able to bend membranes. Tethers liposomes and mediates their fusion; this does not require GTPase activity or the presence of GTP. Both GTPase domains (dynamin-type G) are required for GTPase activity. Has intrinsic affinity for membranes and membrane distortion capability; causes tubulation and membrane distortion when expressed in a Drosophila cell line. The chain is Dynamin-like protein A from Bacillus subtilis (strain 168).